The chain runs to 554 residues: CTP synthase (554 aa).

Residues 1–265 are amidoligase domain; that stretch reads MTPLIFVTGG…DEIVVNQLKL (265 aa). Ser13 serves as a coordination point for CTP. Ser13 contributes to the UTP binding site. ATP contacts are provided by residues 14–19 and Asp71; that span reads SLGKGI. Asp71 and Glu139 together coordinate Mg(2+). Residues 146–148, 186–191, and Lys222 each bind CTP; these read DIE and KTKPTQ. UTP is bound by residues 186–191 and Lys222; that span reads KTKPTQ. Positions 292–545 constitute a Glutamine amidotransferase type-1 domain; sequence TIAVVGKYVD…IRAARERKAG (254 aa). Gly353 lines the L-glutamine pocket. Residue Cys380 is the Nucleophile; for glutamine hydrolysis of the active site. Residues 381-384, Glu404, and Arg471 contribute to the L-glutamine site; that span reads YGMQ. Catalysis depends on residues His518 and Glu520.

It belongs to the CTP synthase family. As to quaternary structure, homotetramer.

It carries out the reaction UTP + L-glutamine + ATP + H2O = CTP + L-glutamate + ADP + phosphate + 2 H(+). It catalyses the reaction L-glutamine + H2O = L-glutamate + NH4(+). The enzyme catalyses UTP + NH4(+) + ATP = CTP + ADP + phosphate + 2 H(+). It participates in pyrimidine metabolism; CTP biosynthesis via de novo pathway; CTP from UDP: step 2/2. Allosterically activated by GTP, when glutamine is the substrate; GTP has no effect on the reaction when ammonia is the substrate. The allosteric effector GTP functions by stabilizing the protein conformation that binds the tetrahedral intermediate(s) formed during glutamine hydrolysis. Inhibited by the product CTP, via allosteric rather than competitive inhibition. Catalyzes the ATP-dependent amination of UTP to CTP with either L-glutamine or ammonia as the source of nitrogen. Regulates intracellular CTP levels through interactions with the four ribonucleotide triphosphates. The protein is CTP synthase of Stenotrophomonas maltophilia (strain R551-3).